The sequence spans 566 residues: Urease subunit alpha (566 aa).

A Urease domain is found at 128 to 566 (GGIDTHIHWI…LPMAQRYFLF (439 aa)). 3 residues coordinate Ni(2+): histidine 133, histidine 135, and lysine 216. Residue lysine 216 is modified to N6-carboxylysine. Residue histidine 218 coordinates substrate. Positions 245 and 271 each coordinate Ni(2+). Catalysis depends on histidine 319, which acts as the Proton donor. Position 359 (aspartate 359) interacts with Ni(2+).

Belongs to the metallo-dependent hydrolases superfamily. Urease alpha subunit family. As to quaternary structure, heterotrimer of UreA (gamma), UreB (beta) and UreC (alpha) subunits. Three heterotrimers associate to form the active enzyme. Requires Ni cation as cofactor. Post-translationally, carboxylation allows a single lysine to coordinate two nickel ions.

The protein resides in the cytoplasm. The catalysed reaction is urea + 2 H2O + H(+) = hydrogencarbonate + 2 NH4(+). It functions in the pathway nitrogen metabolism; urea degradation; CO(2) and NH(3) from urea (urease route): step 1/1. This Acinetobacter baylyi (strain ATCC 33305 / BD413 / ADP1) protein is Urease subunit alpha.